Reading from the N-terminus, the 222-residue chain is Probable transaldolase 2 (222 aa).

K90 acts as the Schiff-base intermediate with substrate in catalysis.

Belongs to the transaldolase family. Type 3B subfamily.

It is found in the cytoplasm. It catalyses the reaction D-sedoheptulose 7-phosphate + D-glyceraldehyde 3-phosphate = D-erythrose 4-phosphate + beta-D-fructose 6-phosphate. It participates in carbohydrate degradation; pentose phosphate pathway; D-glyceraldehyde 3-phosphate and beta-D-fructose 6-phosphate from D-ribose 5-phosphate and D-xylulose 5-phosphate (non-oxidative stage): step 2/3. Transaldolase is important for the balance of metabolites in the pentose-phosphate pathway. The chain is Probable transaldolase 2 from Bacillus anthracis.